Consider the following 336-residue polypeptide: MLYPLIRQFLFQLDPEKAHELTIQQLKRIAGTPLEYLVRQSVPTKAVTCMGIAFKNPLGLAAGLDKNGECIDALGAMGFGFIEVGTVTPHAQIGNEKPRLFRLTKAYGLINRMGFNNKGVDNLVNNIQKSHFGGVLGINIGKNKDTPIEQGKDDYLICMEKVYPYANYIAVNISSPNTPQLTTLQSGEILDDLLRAIKDKQAKLQEYHHKYVPIAVKITPDMTESELIQMADLLVQHKIDGIIATNTTTSRELVHGLDHSSQSGGLSGRPLQLMSTEVIRILSSKLQGKLPIIGVGGIDSLISAREKMAAGATLIQIYSSFIFHGPRLIKDIISDL.

FMN contacts are provided by residues 62-66 (AGLDK) and T86. K66 contributes to the substrate binding site. 111 to 115 (NRMGF) is a binding site for substrate. The FMN site is built by N139 and N172. Residue N172 coordinates substrate. Residue S175 is the Nucleophile of the active site. Position 177 (N177) interacts with substrate. 2 residues coordinate FMN: K217 and T245. 246–247 (NT) is a substrate binding site. FMN-binding positions include G268, G297, and 318–319 (YS).

Belongs to the dihydroorotate dehydrogenase family. Type 2 subfamily. As to quaternary structure, monomer. Requires FMN as cofactor.

It localises to the cell membrane. The catalysed reaction is (S)-dihydroorotate + a quinone = orotate + a quinol. It participates in pyrimidine metabolism; UMP biosynthesis via de novo pathway; orotate from (S)-dihydroorotate (quinone route): step 1/1. Functionally, catalyzes the conversion of dihydroorotate to orotate with quinone as electron acceptor. This chain is Dihydroorotate dehydrogenase (quinone), found in Baumannia cicadellinicola subsp. Homalodisca coagulata.